The following is a 67-amino-acid chain: Alpha-toxin Tf3 (67 aa).

One can recognise an LCN-type CS-alpha/beta domain in the interval 2–63 (KDGYPVEGDN…EPTKTNGRCK (62 aa)). Cystine bridges form between Cys12-Cys62, Cys16-Cys38, Cys24-Cys45, and Cys28-Cys47. The residue at position 64 (Pro64) is a Proline amide.

Belongs to the long (4 C-C) scorpion toxin superfamily. Sodium channel inhibitor family. Alpha subfamily. As to expression, expressed by the venom gland.

It localises to the secreted. In terms of biological role, alpha toxins bind voltage-independently at site-3 of sodium channels (Nav) and inhibit the inactivation of the activated channels, thereby blocking neuronal transmission. The polypeptide is Alpha-toxin Tf3 (Tityus fasciolatus (Central Brazilian scorpion)).